The chain runs to 500 residues: Probable malate:quinone oxidoreductase (500 aa).

The protein belongs to the MQO family. The cofactor is FAD.

It carries out the reaction (S)-malate + a quinone = a quinol + oxaloacetate. The protein operates within carbohydrate metabolism; tricarboxylic acid cycle; oxaloacetate from (S)-malate (quinone route): step 1/1. The chain is Probable malate:quinone oxidoreductase from Bordetella avium (strain 197N).